We begin with the raw amino-acid sequence, 406 residues long: Pyridinium-3,5-bisthiocarboxylic acid mononucleotide nickel insertion protein (406 aa).

Belongs to the LarC family.

The catalysed reaction is Ni(II)-pyridinium-3,5-bisthiocarboxylate mononucleotide = pyridinium-3,5-bisthiocarboxylate mononucleotide + Ni(2+). Its function is as follows. Involved in the biosynthesis of a nickel-pincer cofactor ((SCS)Ni(II) pincer complex). Binds Ni(2+), and functions in nickel delivery to pyridinium-3,5-bisthiocarboxylic acid mononucleotide (P2TMN), to form the mature cofactor. Is thus probably required for the activation of nickel-pincer cofactor-dependent enzymes. The protein is Pyridinium-3,5-bisthiocarboxylic acid mononucleotide nickel insertion protein of Akkermansia muciniphila (strain ATCC BAA-835 / DSM 22959 / JCM 33894 / BCRC 81048 / CCUG 64013 / CIP 107961 / Muc).